A 219-amino-acid chain; its full sequence is Interleukin-12 subunit alpha (219 aa).

An N-terminal signal peptide occupies residues 1–22 (MCPARSLLLVATLVLLDHLSLA). Disulfide bonds link cysteine 37–cysteine 110, cysteine 64–cysteine 196, and cysteine 85–cysteine 123. N-linked (GlcNAc...) asparagine glycans are attached at residues asparagine 93 and asparagine 107.

This sequence belongs to the IL-6 superfamily. Heterodimer with IL12B; disulfide-linked. This heterodimer is known as interleukin IL-12. Heterodimer with EBI3/IL27B; not disulfide-linked. This heterodimer is known as interleukin IL-35. Interacts with NBR1; this interaction promotes IL-12 secretion.

The protein resides in the secreted. Functionally, heterodimerizes with IL12B to form the IL-12 cytokine or with EBI3/IL27B to form the IL-35 cytokine. IL-12 is primarily produced by professional antigen-presenting cells (APCs) such as B-cells and dendritic cells (DCs) as well as macrophages and granulocytes and regulates T-cell and natural killer-cell responses, induces the production of interferon-gamma (IFN-gamma), favors the differentiation of T-helper 1 (Th1) cells and is an important link between innate resistance and adaptive immunity. Mechanistically, exerts its biological effects through a receptor composed of IL12R1 and IL12R2 subunits. Binding to the receptor results in the rapid tyrosine phosphorylation of a number of cellular substrates including the JAK family kinases TYK2 and JAK2. In turn, recruited STAT4 gets phosphorylated and translocates to the nucleus where it regulates cytokine/growth factor responsive genes. As part of IL-35, plays essential roles in maintaining the immune homeostasis of the liver microenvironment and also functions as an immune-suppressive cytokine. Mediates biological events through unconventional receptors composed of IL12RB2 and gp130/IL6ST heterodimers or homodimers. Signaling requires the transcription factors STAT1 and STAT4, which form a unique heterodimer that binds to distinct DNA sites. In Homo sapiens (Human), this protein is Interleukin-12 subunit alpha (IL12A).